The sequence spans 581 residues: Arginine--tRNA ligase (581 aa).

A 'HIGH' region motif is present at residues 126 to 136; that stretch reads PNLAKEMHVGH.

It belongs to the class-I aminoacyl-tRNA synthetase family. Monomer.

It localises to the cytoplasm. It catalyses the reaction tRNA(Arg) + L-arginine + ATP = L-arginyl-tRNA(Arg) + AMP + diphosphate. This chain is Arginine--tRNA ligase, found in Shewanella sediminis (strain HAW-EB3).